Here is a 447-residue protein sequence, read N- to C-terminus: Tubulin beta chain (447 aa).

Q11, E69, S138, G142, T143, G144, N204, and N226 together coordinate GTP. Residue E69 coordinates Mg(2+). The disordered stretch occupies residues 424–447 (QYQEASVSEGEEEYDEEAPLEGEE). A compositionally biased stretch (acidic residues) spans 432 to 447 (EGEEEYDEEAPLEGEE).

Belongs to the tubulin family. In terms of assembly, dimer of alpha and beta chains. A typical microtubule is a hollow water-filled tube with an outer diameter of 25 nm and an inner diameter of 15 nM. Alpha-beta heterodimers associate head-to-tail to form protofilaments running lengthwise along the microtubule wall with the beta-tubulin subunit facing the microtubule plus end conferring a structural polarity. Microtubules usually have 13 protofilaments but different protofilament numbers can be found in some organisms and specialized cells. It depends on Mg(2+) as a cofactor.

It is found in the cytoplasm. It localises to the cytoskeleton. Functionally, tubulin is the major constituent of microtubules, a cylinder consisting of laterally associated linear protofilaments composed of alpha- and beta-tubulin heterodimers. Microtubules grow by the addition of GTP-tubulin dimers to the microtubule end, where a stabilizing cap forms. Below the cap, tubulin dimers are in GDP-bound state, owing to GTPase activity of alpha-tubulin. This chain is Tubulin beta chain (TUB1), found in Cercospora beticola (Sugarbeet leaf spot fungus).